A 365-amino-acid chain; its full sequence is tRNA-specific 2-thiouridylase MnmA (365 aa).

ATP is bound by residues 14 to 21 (AMSGGVDS) and Leu40. The active-site Nucleophile is Cys108. A disulfide bridge connects residues Cys108 and Cys204. Gly132 serves as a coordination point for ATP. Positions 154–156 (KDQ) are interaction with tRNA. The active-site Cysteine persulfide intermediate is Cys204.

It belongs to the MnmA/TRMU family.

Its subcellular location is the cytoplasm. It carries out the reaction S-sulfanyl-L-cysteinyl-[protein] + uridine(34) in tRNA + AH2 + ATP = 2-thiouridine(34) in tRNA + L-cysteinyl-[protein] + A + AMP + diphosphate + H(+). Catalyzes the 2-thiolation of uridine at the wobble position (U34) of tRNA, leading to the formation of s(2)U34. This chain is tRNA-specific 2-thiouridylase MnmA, found in Rickettsia peacockii (strain Rustic).